The chain runs to 78 residues: Acyl carrier protein (78 aa).

The Carrier domain occupies 4–78; that stretch reads AEIKDKVYDI…QQAIDYIVKK (75 aa). An O-(pantetheine 4'-phosphoryl)serine modification is found at Ser-39.

It belongs to the acyl carrier protein (ACP) family. 4'-phosphopantetheine is transferred from CoA to a specific serine of apo-ACP by AcpS. This modification is essential for activity because fatty acids are bound in thioester linkage to the sulfhydryl of the prosthetic group.

It localises to the cytoplasm. Its pathway is lipid metabolism; fatty acid biosynthesis. Functionally, carrier of the growing fatty acid chain in fatty acid biosynthesis. In Chlorobium limicola (strain DSM 245 / NBRC 103803 / 6330), this protein is Acyl carrier protein.